Consider the following 160-residue polypeptide: uncharacterized protein (160 aa).

The 145-residue stretch at 7-151 (LLINFKTLEE…NPYIWHPDMD (145 aa)) folds into the N-acetyltransferase domain.

This is an uncharacterized protein from Bacillus velezensis (strain DSM 23117 / BGSC 10A6 / LMG 26770 / FZB42) (Bacillus amyloliquefaciens subsp. plantarum).